The primary structure comprises 130 residues: Protein ApaG (130 aa).

One can recognise an ApaG domain in the interval 3–127 (KAETRGIMVT…FSLDSPHLRR (125 aa)).

This Methylorubrum extorquens (strain CM4 / NCIMB 13688) (Methylobacterium extorquens) protein is Protein ApaG.